A 234-amino-acid polypeptide reads, in one-letter code: NLP effector protein Pc576423 (234 aa).

Residues 1 to 18 form the signal peptide; the sequence is MNLRAIAVTFATFAGANA. 2 N-linked (GlcNAc...) asparagine glycosylation sites follow: N35 and N66. Residues 119-125 carry the Hepta-peptide GHRHDWE motif motif; the sequence is GHRHDWE.

It belongs to the Necrosis inducing protein (NPP1) family.

The protein resides in the secreted. Its function is as follows. Secreted effector that contributes strongly to virulence during infection by P.capsici. In Phytophthora capsici, this protein is NLP effector protein Pc576423.